The following is a 410-amino-acid chain: Histidine--tRNA ligase (410 aa).

This sequence belongs to the class-II aminoacyl-tRNA synthetase family.

Its subcellular location is the cytoplasm. The catalysed reaction is tRNA(His) + L-histidine + ATP = L-histidyl-tRNA(His) + AMP + diphosphate + H(+). This is Histidine--tRNA ligase from Methanocorpusculum labreanum (strain ATCC 43576 / DSM 4855 / Z).